The primary structure comprises 550 residues: Small ribosomal subunit protein uS3m (550 aa).

The interval 112-133 (NDDTEEERNEVGGRGAGKRVES) is disordered.

The protein belongs to the universal ribosomal protein uS3 family.

The protein localises to the mitochondrion. The protein is Small ribosomal subunit protein uS3m (RPS3) of Oenothera berteroana (Bertero's evening primrose).